Consider the following 37-residue polypeptide: Esculentin-2B (37 aa).

Residues cysteine 31 and cysteine 37 are joined by a disulfide bond.

The protein belongs to the frog skin active peptide (FSAP) family. Esculentin subfamily. As to expression, expressed by the skin glands.

It is found in the secreted. Its function is as follows. Shows antibacterial activity against representative Gram-negative and Gram-positive bacterial species, and hemolytic activity. The protein is Esculentin-2B of Pelophylax lessonae (Pool frog).